Consider the following 418-residue polypeptide: Acyl-[acyl-carrier-protein] desaturase 4, chloroplastic (418 aa).

The N-terminal 70 residues, 1–70, are a transit peptide targeting the chloroplast; sequence MASSGLAVAA…ATAAAPADTA (70 aa). Fe cation-binding residues include Glu-152, Glu-190, His-193, Glu-243, Glu-276, and His-279.

It belongs to the fatty acid desaturase type 2 family. Homodimer. Requires Fe(2+) as cofactor.

Its subcellular location is the plastid. The protein resides in the chloroplast. The protein operates within lipid metabolism; fatty acid metabolism. In terms of biological role, introduces a cis double bond in the acyl chain of an acyl-[acyl-carrier protein]. The polypeptide is Acyl-[acyl-carrier-protein] desaturase 4, chloroplastic (Oryza sativa subsp. japonica (Rice)).